A 334-amino-acid chain; its full sequence is 6-phosphogluconolactonase (334 aa).

Belongs to the cycloisomerase 2 family.

The catalysed reaction is 6-phospho-D-glucono-1,5-lactone + H2O = 6-phospho-D-gluconate + H(+). The protein operates within carbohydrate degradation; pentose phosphate pathway; D-ribulose 5-phosphate from D-glucose 6-phosphate (oxidative stage): step 2/3. Its function is as follows. Catalyzes the hydrolysis of 6-phosphogluconolactone to 6-phosphogluconate. The protein is 6-phosphogluconolactonase of Yersinia pseudotuberculosis serotype IB (strain PB1/+).